The primary structure comprises 95 residues: Large ribosomal subunit protein bL25 (95 aa).

Belongs to the bacterial ribosomal protein bL25 family. In terms of assembly, part of the 50S ribosomal subunit; part of the 5S rRNA/L5/L18/L25 subcomplex. Contacts the 5S rRNA. Binds to the 5S rRNA independently of L5 and L18.

Functionally, this is one of the proteins that binds to the 5S RNA in the ribosome where it forms part of the central protuberance. The sequence is that of Large ribosomal subunit protein bL25 from Chromobacterium violaceum (strain ATCC 12472 / DSM 30191 / JCM 1249 / CCUG 213 / NBRC 12614 / NCIMB 9131 / NCTC 9757 / MK).